An 811-amino-acid polypeptide reads, in one-letter code: Ribosome biogenesis protein ERB1 (811 aa).

Positions 1–11 (MARNSKATDTP) are enriched in polar residues. Residues 1-138 (MARNSKATDT…VHTKFSDGRP (138 aa)) are disordered. Residues 27–96 (EDAEESSSDE…LSDVDSEEFS (70 aa)) are compositionally biased toward acidic residues. Over residues 104–121 (ASITDKLSGTKIRSYSNA) the composition is skewed to polar residues. The span at 128–138 (EVHTKFSDGRP) shows a compositional bias: basic and acidic residues. Residues 270–386 (RFVPSKHEAK…LRKVPGYQEG (117 aa)) are required for interaction with NOP7. The segment at 386-422 (GLRERFERCLDLYLAPRTRHNKLNIDPDSLIPELPSP) is required for interaction with YTM1. WD repeat units follow at residues 438–477 (GHTEKIRTLSISPDGLWLATGSDDGSVRIWEILTGRQVYK) and 485–525 (NTDD…FDIE). The disordered stretch occupies residues 547–566 (TKNSNIKVNSDDEDEEVEKA). WD repeat units lie at residues 595–637 (QCRK…SQSP), 640–678 (KSKGIIMDAKFHPFKPQLFVASQRYIRIYDLAQQVLVKK), 681–720 (PGARWLSNIDIHPRGDNLLASSYDKRVLWHDLDLSSTPYK), 724–764 (YHDK…DLMT), and 780–811 (INSLGVLDLVWHPKEAWLFSAGADGTARLWTT).

The protein belongs to the WD repeat BOP1/ERB1 family. In terms of assembly, component of the NOP7 complex, composed of ERB1, NOP7 and YTM1. The complex is held together by ERB1, which interacts with NOP7 via its N-terminal domain and with YTM1 via a high-affinity interaction between the seven-bladed beta-propeller domains of the 2 proteins. The NOP7 complex associates with the 66S pre-ribosome.

Its subcellular location is the nucleus. The protein resides in the nucleolus. The protein localises to the nucleoplasm. Functionally, component of the NOP7 complex, which is required for maturation of the 25S and 5.8S ribosomal RNAs and formation of the 60S ribosome. The polypeptide is Ribosome biogenesis protein ERB1 (Debaryomyces hansenii (strain ATCC 36239 / CBS 767 / BCRC 21394 / JCM 1990 / NBRC 0083 / IGC 2968) (Yeast)).